The following is a 222-amino-acid chain: uncharacterized protein (222 aa).

The segment at residues 1-27 is a signal peptide (tat-type signal); sequence MSFTRRKFVLGMGTVIFFTGSASSLLA. 3 consecutive 4Fe-4S ferredoxin-type domains span residues 37 to 67, 83 to 114, and 115 to 144; these read YAMI…AQGS, TQYH…RDEQ, and GIVR…LNPV. Residues cysteine 46, cysteine 49, cysteine 52, cysteine 56, cysteine 92, cysteine 95, cysteine 100, cysteine 104, cysteine 124, cysteine 127, cysteine 130, cysteine 134, cysteine 151, cysteine 154, cysteine 167, and cysteine 171 each contribute to the [4Fe-4S] cluster site.

Exported by the Tat system. The position of the signal peptide cleavage has not been experimentally proven. Can also be exported by the Sec system.

This is an uncharacterized protein from Escherichia coli (strain K12).